A 61-amino-acid polypeptide reads, in one-letter code: Large ribosomal subunit protein eL24 (61 aa).

Zn(2+) contacts are provided by Cys7, Cys10, Cys33, and Cys37. Residues 7-37 (CSFCGKEIPPATGLMYIRNDGSILWFCSNKC) form a C4-type zinc finger.

This sequence belongs to the eukaryotic ribosomal protein eL24 family. As to quaternary structure, part of the 50S ribosomal subunit. Forms a cluster with proteins L3 and L14. Zn(2+) is required as a cofactor.

Its function is as follows. Binds to the 23S rRNA. The sequence is that of Large ribosomal subunit protein eL24 from Sulfurisphaera tokodaii (strain DSM 16993 / JCM 10545 / NBRC 100140 / 7) (Sulfolobus tokodaii).